We begin with the raw amino-acid sequence, 197 residues long: Histone chaperone asf1b-B (197 aa).

The protein belongs to the ASF1 family. In terms of assembly, interacts with histone H3 and histone H4.

The protein resides in the nucleus. Histone chaperone that facilitates histone deposition and histone exchange and removal during nucleosome assembly and disassembly. In Danio rerio (Zebrafish), this protein is Histone chaperone asf1b-B (asf1bb).